The chain runs to 493 residues: Insulinoma-associated protein 2 (493 aa).

Basic residues predominate over residues 1–12 (MPRGFLVKRTKR). Residues 1 to 20 (MPRGFLVKRTKRSGSSYRAR) form an SNAG domain region. Residues 1-77 (MPRGFLVKRT…PGPSPARPAG (77 aa)) form a disordered region. The C2H2-type 1; atypical zinc finger occupies 203 to 223 (FICQLCKHQYADPFALAQHRC). The C2H2-type 2 zinc-finger motif lies at 231–253 (YRCPECDKVFSCPANLASHRRWH). The segment at 248–310 (SHRRWHKPRP…SGDGQHRDSA (63 aa)) is disordered. The span at 267-276 (PHAPLTPPDP) shows a compositional bias: pro residues. Basic and acidic residues predominate over residues 283–294 (ENGRVPRTDDQH). 3 consecutive C2H2-type zinc fingers follow at residues 354-376 (FVCPYCHKKFRRQAYLRKHLGTH), 398-420 (FACPLCGAHFPSADIREKHRLWH), and 452-475 (FSCKYCPSTFFSSPGLTRHINKCH).

Expressed in spleen, stomach, liver, kidney and testis. In the pancreas, expressed in islet cells, including insulin-producing beta-cells, but not in acinar cells (at protein level). In the brain, expressed in the neuronal cells of the cerebral cortex, the Purkinje cells of the cerebellum and the hippocampal region including CA1 and CA3 (at protein level).

It localises to the cytoplasm. It is found in the nucleus. Functionally, may function as a growth suppressor or tumor suppressor in liver cells and in certain neurons. This is Insulinoma-associated protein 2 (Insm2) from Mus musculus (Mouse).